Consider the following 69-residue polypeptide: Large ribosomal subunit protein bL31 (69 aa).

Cysteine 17, cysteine 19, cysteine 37, and cysteine 40 together coordinate Zn(2+).

It belongs to the bacterial ribosomal protein bL31 family. Type A subfamily. Part of the 50S ribosomal subunit. Zn(2+) is required as a cofactor.

Binds the 23S rRNA. This is Large ribosomal subunit protein bL31 from Clostridium novyi (strain NT).